A 331-amino-acid chain; its full sequence is 4-hydroxy-3-methylbut-2-enyl diphosphate reductase (331 aa).

Residue Cys12 coordinates [4Fe-4S] cluster. 2 residues coordinate (2E)-4-hydroxy-3-methylbut-2-enyl diphosphate: His43 and His81. Residues His43 and His81 each coordinate dimethylallyl diphosphate. His43 and His81 together coordinate isopentenyl diphosphate. Cys103 contributes to the [4Fe-4S] cluster binding site. His131 is a (2E)-4-hydroxy-3-methylbut-2-enyl diphosphate binding site. Residue His131 participates in dimethylallyl diphosphate binding. His131 contributes to the isopentenyl diphosphate binding site. Glu133 functions as the Proton donor in the catalytic mechanism. Residue Thr170 participates in (2E)-4-hydroxy-3-methylbut-2-enyl diphosphate binding. Cys198 contacts [4Fe-4S] cluster. (2E)-4-hydroxy-3-methylbut-2-enyl diphosphate contacts are provided by Ser226, Asn228, and Ser271. Dimethylallyl diphosphate contacts are provided by Ser226, Asn228, and Ser271. Ser226, Asn228, and Ser271 together coordinate isopentenyl diphosphate.

It belongs to the IspH family. Requires [4Fe-4S] cluster as cofactor.

The enzyme catalyses isopentenyl diphosphate + 2 oxidized [2Fe-2S]-[ferredoxin] + H2O = (2E)-4-hydroxy-3-methylbut-2-enyl diphosphate + 2 reduced [2Fe-2S]-[ferredoxin] + 2 H(+). It carries out the reaction dimethylallyl diphosphate + 2 oxidized [2Fe-2S]-[ferredoxin] + H2O = (2E)-4-hydroxy-3-methylbut-2-enyl diphosphate + 2 reduced [2Fe-2S]-[ferredoxin] + 2 H(+). It functions in the pathway isoprenoid biosynthesis; dimethylallyl diphosphate biosynthesis; dimethylallyl diphosphate from (2E)-4-hydroxy-3-methylbutenyl diphosphate: step 1/1. It participates in isoprenoid biosynthesis; isopentenyl diphosphate biosynthesis via DXP pathway; isopentenyl diphosphate from 1-deoxy-D-xylulose 5-phosphate: step 6/6. In terms of biological role, catalyzes the conversion of 1-hydroxy-2-methyl-2-(E)-butenyl 4-diphosphate (HMBPP) into a mixture of isopentenyl diphosphate (IPP) and dimethylallyl diphosphate (DMAPP). Acts in the terminal step of the DOXP/MEP pathway for isoprenoid precursor biosynthesis. The chain is 4-hydroxy-3-methylbut-2-enyl diphosphate reductase from Listeria monocytogenes serovar 1/2a (strain ATCC BAA-679 / EGD-e).